The following is a 62-amino-acid chain: Conotoxin reg3.7 (62 aa).

Residues 1 to 15 (RVLLTICLLLFPLSA) form the signal peptide. The propeptide occupies 16 to 45 (LPLDGDQPADQPARHMQSAERNPRFDPVKR). Positions 17-37 (PLDGDQPADQPARHMQSAERN) are disordered. Disulfide bonds link Cys-46/Cys-60, Cys-47/Cys-58, and Cys-52/Cys-61. Cys-61 carries the post-translational modification Cysteine amide.

Belongs to the conotoxin M superfamily. Expressed by the venom duct.

The protein localises to the secreted. The protein is Conotoxin reg3.7 of Conus regius (Crown cone).